Reading from the N-terminus, the 275-residue chain is Methyltransferase str2 (275 aa).

It belongs to the methyltransferase superfamily. LaeA methyltransferase family.

The protein operates within mycotoxin biosynthesis. Functionally, methyltransferase; part of the gene cluster that mediates the biosynthesis of strobilurin A, an antifungal polyketide that contains a key beta-methoxyacrylate toxophore that targets the complex III of the mitochondrial electron transport chain. Strobilurin biosynthesis begins with construction of benzoyl CoA by step-wise elimination of ammonia from phenylalanine by the phenylalanine ammonia-lyase str11, oxygenation by str8 and retro-Claisen reaction to form benzoic acid, which is activated to its CoA thiolester benzoyl CoA by the dedicated CoA ligase str10. Benzoyl CoA forms the starter unit for the highly reducing polyketide synthase stpks1 that produces the polyketide prestrobilutin A. The FAD-dependent oxygenase str9 then catalyzes the key oxidative rearrangement responsible for the creation of the beta-methoxyacrylate toxophore. Str9 performs epoxidation of the 2,3 olefin of prestrobilutin A, followed by Meinwald rearrangement to furnish the aldehyde intermediate. Rapid enolization of the aldehyde intermediate would give the beta-methoxyacrylate skeleton and methylations catalyzed by str2 and str3 complete the synthesis and lead to the production of strobilurin A. The short-chain dehydrogenase stl2 and the dehydrogenase str4 play a role in the shunt pathway leading to the production of bolineol. The cluster encodes no obvious halogenase gene that could be involved in production of strobilurin B, nor any obvious dimethylallyl-transferase that could be involved in the production of strobilurin G. It is possible that unknown proteins encoded in, or near, the cluster (such as str1 or stl1) may form new classes of halogenases or dimethylally-transferases, or that the responsible genes are located elsewhere on the genome. Similarly, proteins encoded by str5/str6 hydrolases appear to have no chemical role in the biosynthesis of strobilurin A. Finally, no obvious self-resistance gene is found within the cluster. The polypeptide is Methyltransferase str2 (Strobilurus tenacellus).